The following is a 460-amino-acid chain: Solute carrier family 52, riboflavin transporter, member 3 (460 aa).

The Cytoplasmic segment spans residues 1–6; the sequence is MAFLTH. The chain crosses the membrane as a helical span at residues 7 to 27; it reads LLVCVFGMGSWVAINGLWVEL. The Extracellular segment spans residues 28–37; that stretch reads PLLVTELPEA. The chain crosses the membrane as a helical span at residues 38–58; that stretch reads WYLPSYLTVVIQLANIGPLLV. Topologically, residues 59–71 are cytoplasmic; sequence TLMHRFRPGCLSE. A helical membrane pass occupies residues 72–92; the sequence is VPVIFLILCVGTAACILLAFL. Residues 93–105 are Extracellular-facing; sequence WNVTSWIQGGQHS. N-linked (GlcNAc...) asparagine glycosylation occurs at Asn94. Residues 106–126 form a helical membrane-spanning segment; that stretch reads VAFIVLTFFLALVDCTSSVTF. At 127-137 the chain is on the cytoplasmic side; the sequence is LPFMSQLPTYY. Residues 138–158 form a helical membrane-spanning segment; sequence LTTFFIGEGLSGLLPALVALV. The Extracellular portion of the chain corresponds to 159 to 211; it reads QGSGITTCVNVTETPGTTLNTMETPITQGNLSPSLPSPSWHQESRYLAPRFSP. A glycan (N-linked (GlcNAc...) asparagine) is linked at Asn168. The helical transmembrane segment at 212-232 threads the bilayer; it reads LLFFLLLSFLTGCCLVAFFLL. Residues 233–291 lie on the Cytoplasmic side of the membrane; sequence QRQPWGRQGSIEDLLHSQVTLHSIRPRDTEDTSSLGAPVSSPGKGSVEASVASLRPAQL. A phosphoserine mark is found at Ser242 and Ser266. The chain crosses the membrane as a helical span at residues 292-312; the sequence is AFIYSVVAFVNALTNGVLPSV. The Extracellular portion of the chain corresponds to 313–326; sequence QTYSCLPYGPVAYH. The chain crosses the membrane as a helical span at residues 327 to 347; sequence LSATLSSVASPLACFLPIFLP. At 348-350 the chain is on the cytoplasmic side; sequence NRS. The chain crosses the membrane as a helical span at residues 351 to 371; sequence LLFLGVLTVLGTGFGAYNMAM. Residues 372-387 lie on the Extracellular side of the membrane; sequence AAMSPCPVLQGHWGGE. An intrachain disulfide couples Cys377 to Cys454. The helical transmembrane segment at 388–408 threads the bilayer; sequence VLIVLSWVLFAACLSYVKVML. Residues 409-418 are Cytoplasmic-facing; sequence GVILRDRSRS. The helical transmembrane segment at 419–439 threads the bilayer; it reads ALLWCGAAVQLGSLIGALLMF. Residues 440–460 are Extracellular-facing; that stretch reads PLVNVLKLFSSADYCSLDCSV.

The protein belongs to the riboflavin transporter family. In terms of tissue distribution, within the small intestine, it is particularly expressed in the jujenum and the ileum. Almost negligible expression in the stomach, duodenum, and large intestine.

It is found in the cell membrane. The catalysed reaction is riboflavin(in) = riboflavin(out). In terms of biological role, plasma membrane transporter mediating the uptake by cells of the water soluble vitamin B2/riboflavin that plays a key role in biochemical oxidation-reduction reactions of the carbohydrate, lipid, and amino acid metabolism. The chain is Solute carrier family 52, riboflavin transporter, member 3 (Slc52a3) from Mus musculus (Mouse).